Here is a 416-residue protein sequence, read N- to C-terminus: Cyclin-L1-1 (416 aa).

The tract at residues 286–416 (KCTAGSANND…DSSKDRRRHH (131 aa)) is disordered. 4 stretches are compositionally biased toward basic and acidic residues: residues 304 to 315 (PHEKATDSKKSG), 328 to 374 (SYER…DKLK), 384 to 393 (RLKDSGGHSD), and 401 to 410 (RDRDYRDSSK).

Belongs to the cyclin family. Cyclin L subfamily. Forms a complex with CDKG1. Interacts with MOS4 and associates with the spliceosome.

Its subcellular location is the nucleus. Its function is as follows. Cognate cyclin for CDKG1. Required for synapsis and male meiosis, and for the proper splicing of specific resistance (R) genes. Involved in regulation of DNA methylation and transcriptional silencing. The protein is Cyclin-L1-1 (CYCL1-1) of Arabidopsis thaliana (Mouse-ear cress).